Here is a 138-residue protein sequence, read N- to C-terminus: Proline-rich protein 34 (138 aa).

The span at 22 to 37 shows a compositional bias: pro residues; it reads SAPTSPPNPATRPAPG. Disordered stretches follow at residues 22-55 and 81-107; these read SAPT…PTRG and APRL…SPAR.

The sequence is that of Proline-rich protein 34 (PRR34) from Homo sapiens (Human).